We begin with the raw amino-acid sequence, 1310 residues long: Major viral transcription factor ICP4 homolog (1310 aa).

3 disordered regions span residues Ala117 to Glu271, Gly285 to Ile454, and Gly636 to Asp696. Basic and acidic residues predominate over residues Pro341–Glu350. Low complexity-rich tracts occupy residues Phe351–Ser364, Pro392–Ser407, and Pro648–Ala666. The Nuclear localization signal motif lies at Arg677–Lys685. A phosphoserine; by VZV ORF66 mark is found at Ser686 and Ser722. Disordered regions lie at residues Arg1195–Val1258 and Glu1282–Gly1310. Residues Arg1217–Glu1227 show a composition bias toward basic and acidic residues. The segment covering Pro1228–Asp1250 has biased composition (acidic residues).

Belongs to the herpesviridae ICP4 family. Interacts with IE4 and IE63. Interacts with human USF1 and SP1. Post-translationally, phosphorylated by ORF66 protein kinase on Ser-686 and Ser-722. Also phosphorylated by ORF47 protein kinase and by human CSNK2A1/CKII.

The protein localises to the host nucleus. The protein resides in the host cytoplasm. It is found in the virion tegument. Its function is as follows. Transcriptional transactivator. May interact with and recruit specific components of the general transcription machinery to viral promoters and stabilize their formation for transcription initiation. Negatively regulates its own transcription. This immediate early (EI) protein may be necessary in virion for viral pathogenesis. This chain is Major viral transcription factor ICP4 homolog, found in Homo sapiens (Human).